Here is a 151-residue protein sequence, read N- to C-terminus: Large ribosomal subunit protein bL9 (151 aa).

Belongs to the bacterial ribosomal protein bL9 family.

Its function is as follows. Binds to the 23S rRNA. The polypeptide is Large ribosomal subunit protein bL9 (Chlorobium luteolum (strain DSM 273 / BCRC 81028 / 2530) (Pelodictyon luteolum)).